The sequence spans 276 residues: Type II pantothenate kinase (276 aa).

8–15 (DAGGTLTK) is a binding site for ATP. Glu76 acts as the Proton acceptor in catalysis. ATP is bound by residues Thr105, 127-131 (GGTIM), Phe143, and Ser230.

Belongs to the type II pantothenate kinase family. Homodimer.

The protein localises to the cytoplasm. It carries out the reaction (R)-pantothenate + ATP = (R)-4'-phosphopantothenate + ADP + H(+). It participates in cofactor biosynthesis; coenzyme A biosynthesis; CoA from (R)-pantothenate: step 1/5. In terms of biological role, catalyzes the phosphorylation of pantothenate (Pan), the first step in CoA biosynthesis. This chain is Type II pantothenate kinase, found in Bacillus thuringiensis subsp. konkukian (strain 97-27).